A 208-amino-acid chain; its full sequence is Ribosome maturation factor RimP (208 aa).

The interval 175–208 is disordered; that stretch reads GEDVEDLVADPGADDELDELDELDELDDGDEDEQ. Residues 177–208 show a composition bias toward acidic residues; that stretch reads DVEDLVADPGADDELDELDELDELDDGDEDEQ.

Belongs to the RimP family.

Its subcellular location is the cytoplasm. Its function is as follows. Required for maturation of 30S ribosomal subunits. The chain is Ribosome maturation factor RimP from Kineococcus radiotolerans (strain ATCC BAA-149 / DSM 14245 / SRS30216).